Reading from the N-terminus, the 473-residue chain is Ribulose bisphosphate carboxylase large chain (473 aa).

Positions 1 to 2 (MS) are excised as a propeptide. Position 3 is an N-acetylproline (proline 3). Lysine 14 bears the N6,N6,N6-trimethyllysine mark. Substrate contacts are provided by asparagine 123 and threonine 173. Lysine 175 functions as the Proton acceptor in the catalytic mechanism. Substrate is bound at residue lysine 177. The Mg(2+) site is built by lysine 201, aspartate 203, and glutamate 204. Lysine 201 carries the N6-carboxylysine modification. The Proton acceptor role is filled by histidine 294. Positions 295, 327, and 379 each coordinate substrate.

This sequence belongs to the RuBisCO large chain family. Type I subfamily. As to quaternary structure, heterohexadecamer of 8 large chains and 8 small chains; disulfide-linked. The disulfide link is formed within the large subunit homodimers. It depends on Mg(2+) as a cofactor. In terms of processing, the disulfide bond which can form in the large chain dimeric partners within the hexadecamer appears to be associated with oxidative stress and protein turnover.

The protein localises to the plastid. It localises to the chloroplast. It carries out the reaction 2 (2R)-3-phosphoglycerate + 2 H(+) = D-ribulose 1,5-bisphosphate + CO2 + H2O. It catalyses the reaction D-ribulose 1,5-bisphosphate + O2 = 2-phosphoglycolate + (2R)-3-phosphoglycerate + 2 H(+). In terms of biological role, ruBisCO catalyzes two reactions: the carboxylation of D-ribulose 1,5-bisphosphate, the primary event in carbon dioxide fixation, as well as the oxidative fragmentation of the pentose substrate in the photorespiration process. Both reactions occur simultaneously and in competition at the same active site. The protein is Ribulose bisphosphate carboxylase large chain of Ajuga chamaepitys (Yellow bugle).